Here is a 147-residue protein sequence, read N- to C-terminus: Hemoglobin subunit beta (147 aa).

Valine 2 carries the post-translational modification N-acetylvaline. Residues 3–147 form the Globin domain; the sequence is HLTAEEKAAV…VATALAHKYH (145 aa). A Phosphothreonine modification is found at threonine 13. The residue at position 45 (serine 45) is a Phosphoserine. Position 60 is an N6-acetyllysine (lysine 60). Histidine 64 contributes to the heme b binding site. The residue at position 83 (lysine 83) is an N6-acetyllysine. Histidine 93 serves as a coordination point for heme b. Residue cysteine 94 is modified to S-nitrosocysteine. Lysine 145 is subject to N6-acetyllysine.

The protein belongs to the globin family. Heterotetramer of two alpha chains and two beta chains. As to expression, red blood cells.

Functionally, involved in oxygen transport from the lung to the various peripheral tissues. The chain is Hemoglobin subunit beta (HBB) from Carlito syrichta (Philippine tarsier).